A 562-amino-acid polypeptide reads, in one-letter code: Tissue-type plasminogen activator (562 aa).

An N-terminal signal peptide occupies residues 1–19; it reads MYALKRELWCVLLLCGAIC. The propeptide occupies 20–32; that stretch reads TSPSQETHRRLRR. Residues 33–35 constitute a propeptide, removed by plasmin; the sequence is GVR. The Fibronectin type-I domain occupies 39-81; that stretch reads VTCRDEKTQMIYQQHQSWLRPLLRGNRVEHCWCNDGQTQCHSV. 17 disulfide bridges follow: Cys41/Cys71, Cys69/Cys78, Cys86/Cys97, Cys91/Cys108, Cys110/Cys119, Cys127/Cys208, Cys148/Cys190, Cys179/Cys203, Cys215/Cys296, Cys236/Cys278, Cys267/Cys291, Cys299/Cys430, Cys342/Cys358, Cys350/Cys419, Cys444/Cys519, Cys476/Cys492, and Cys509/Cys537. Residues 42-52 are important for binding to annexin A2; that stretch reads RDEKTQMIYQQ. The EGF-like domain occupies 82–120; that stretch reads PVKSCSEPRCFNGGTCLQAIYFSDFVCQCPVGFIGRQCE. Thr96 is a glycosylation site (O-linked (Fuc) threonine). 2 consecutive Kringle domains span residues 126–208 and 214–296; these read TCYE…TPAC and ECYT…LPQC. The N-linked (GlcNAc...) asparagine glycan is linked to Asn152. One can recognise a Peptidase S1 domain in the interval 311 to 561; it reads IKGGLYADIT…YLNWIRDNTR (251 aa). Catalysis depends on charge relay system residues His357 and Asp406. The N-linked (GlcNAc...) asparagine glycan is linked to Asn483. Ser513 serves as the catalytic Charge relay system.

The protein belongs to the peptidase S1 family. In terms of assembly, heterodimer of chain A and chain B held by a disulfide bond. Binds to fibrin with high affinity. This interaction leads to an increase in the catalytic efficiency of the enzyme due to an increase in affinity for plasminogen. Similarly, binding to heparin increases the activation of plasminogen. Binds to annexin A2, cytokeratin-8, fibronectin and laminin. Binds to mannose receptor and the low-density lipoprotein receptor-related protein (LRP1); these proteins are involved in TPA clearance. Binds LRP1B; binding is followed by internalization and degradation. Forms heterodimer with SERPINA5. Interacts with SERPINE1. In complex with SERPINE1, interacts with SORL1. In terms of processing, the single chain, almost fully active enzyme, can be further processed into a two-chain fully active form by a cleavage after Arg-310 catalyzed by plasmin, tissue kallikrein or factor Xa.

The protein resides in the secreted. It localises to the extracellular space. It carries out the reaction Specific cleavage of Arg-|-Val bond in plasminogen to form plasmin.. Its activity is regulated as follows. Inhibited by SERPINA5. Inhibited by SERPINE1. In terms of biological role, converts the abundant, but inactive, zymogen plasminogen to plasmin by hydrolyzing a single Arg-Val bond in plasminogen. By controlling plasmin-mediated proteolysis, it plays an important role in tissue remodeling and degradation, in cell migration and many other physiopathological events. During oocyte activation, plays a role in cortical granule reaction in the zona reaction, which contributes to the block to polyspermy. The polypeptide is Tissue-type plasminogen activator (PLAT) (Sus scrofa (Pig)).